The primary structure comprises 254 residues: MNRRRRIYEGKAKILYEGPEPGTLIQFFKDDATAFNKKKHDVIDGKGVLNNRISEYIFTHLNKIGIPTHFIRRLNMREQLIKEVEIIPLEIVVRNVAAGSLAKRLGIEEGTVLPRSIIEFYYKADALDDPMVSEEHITAFGWASPQELDDIMALAIRINDFLSGLFLGVGIQLVDFKVECGRLYEGDMMRIVLADEISPDSCRLWDIETKEKMDKDRFRRDMGGLVEAYQEVARRLGIINENEPPRGSGPVLVK.

The protein belongs to the SAICAR synthetase family.

It catalyses the reaction 5-amino-1-(5-phospho-D-ribosyl)imidazole-4-carboxylate + L-aspartate + ATP = (2S)-2-[5-amino-1-(5-phospho-beta-D-ribosyl)imidazole-4-carboxamido]succinate + ADP + phosphate + 2 H(+). The protein operates within purine metabolism; IMP biosynthesis via de novo pathway; 5-amino-1-(5-phospho-D-ribosyl)imidazole-4-carboxamide from 5-amino-1-(5-phospho-D-ribosyl)imidazole-4-carboxylate: step 1/2. The polypeptide is Phosphoribosylaminoimidazole-succinocarboxamide synthase (Rhizobium meliloti (strain 1021) (Ensifer meliloti)).